Here is a 314-residue protein sequence, read N- to C-terminus: tRNA dimethylallyltransferase (314 aa).

Residue 11-18 (GPTGSGKT) coordinates ATP. A substrate-binding site is contributed by 13–18 (TGSGKT). The interaction with substrate tRNA stretch occupies residues 36–39 (DSMQ).

Belongs to the IPP transferase family. In terms of assembly, monomer. Mg(2+) serves as cofactor.

It catalyses the reaction adenosine(37) in tRNA + dimethylallyl diphosphate = N(6)-dimethylallyladenosine(37) in tRNA + diphosphate. Functionally, catalyzes the transfer of a dimethylallyl group onto the adenine at position 37 in tRNAs that read codons beginning with uridine, leading to the formation of N6-(dimethylallyl)adenosine (i(6)A). This Chlamydia muridarum (strain MoPn / Nigg) protein is tRNA dimethylallyltransferase.